Reading from the N-terminus, the 176-residue chain is NAD(P)H-quinone oxidoreductase subunit 6, chloroplastic (176 aa).

5 helical membrane passes run 10–30, 33–53, 60–80, 95–115, and 152–172; these read ILVL…VLLT, IYSA…YFLL, VAQL…AVMF, IGDG…MTTI, and FYLP…GAIT.

Belongs to the complex I subunit 6 family. As to quaternary structure, NDH is composed of at least 16 different subunits, 5 of which are encoded in the nucleus.

Its subcellular location is the plastid. It localises to the chloroplast thylakoid membrane. It catalyses the reaction a plastoquinone + NADH + (n+1) H(+)(in) = a plastoquinol + NAD(+) + n H(+)(out). The enzyme catalyses a plastoquinone + NADPH + (n+1) H(+)(in) = a plastoquinol + NADP(+) + n H(+)(out). NDH shuttles electrons from NAD(P)H:plastoquinone, via FMN and iron-sulfur (Fe-S) centers, to quinones in the photosynthetic chain and possibly in a chloroplast respiratory chain. The immediate electron acceptor for the enzyme in this species is believed to be plastoquinone. Couples the redox reaction to proton translocation, and thus conserves the redox energy in a proton gradient. This is NAD(P)H-quinone oxidoreductase subunit 6, chloroplastic (ndhG) from Zea mays (Maize).